Consider the following 1080-residue polypeptide: DNA-directed RNA polymerase subunit beta C-terminal section (1080 aa).

This sequence belongs to the RNA polymerase beta chain family. In terms of assembly, in plastids the minimal PEP RNA polymerase catalytic core is composed of four subunits: alpha, beta, beta', and beta''. When a (nuclear-encoded) sigma factor is associated with the core the holoenzyme is formed, which can initiate transcription.

It is found in the plastid. The protein resides in the chloroplast. The catalysed reaction is RNA(n) + a ribonucleoside 5'-triphosphate = RNA(n+1) + diphosphate. Its function is as follows. DNA-dependent RNA polymerase catalyzes the transcription of DNA into RNA using the four ribonucleoside triphosphates as substrates. This Stigeoclonium helveticum (Green alga) protein is DNA-directed RNA polymerase subunit beta C-terminal section (rpoB2).